Consider the following 518-residue polypeptide: Zinc finger protein 449 (518 aa).

The SCAN box domain occupies 30-112 (RQRFRQFQYR…SLIEDLQREL (83 aa)). Residues 292–304 (NPTLGETPENSNL) show a composition bias toward polar residues. Positions 292–325 (NPTLGETPENSNLEEPLNPKPHKKKSPGEKPHRC) are disordered. 7 C2H2-type zinc fingers span residues 323–345 (HRCPQCGKCFARKSQLTGHQRIH), 351–373 (HKCPECGKRFLRSSDLYRHQRLH), 379–401 (YECTVCKKRFTRRSHLIGHQRTH), 407–429 (YKCLECGKSFCHGSSLKRHLKTH), 435–457 (HRCHNCGKSFSRLTALTLHQRTH), 463–485 (FKCNYCGKSFRQRPSLVIHLRIH), and 491–513 (YKCTHCSKSFRQRAGLIMHQVTH).

It belongs to the krueppel C2H2-type zinc-finger protein family.

It localises to the nucleus. Functionally, may be involved in transcriptional regulation. This chain is Zinc finger protein 449 (ZNF449), found in Gorilla gorilla gorilla (Western lowland gorilla).